We begin with the raw amino-acid sequence, 393 residues long: S-adenosylmethionine synthase 4 (393 aa).

A Mg(2+)-binding site is contributed by glutamate 9. ATP is bound at residue histidine 15. Glutamate 43 contacts K(+). The L-methionine site is built by glutamate 56 and glutamine 99. ATP contacts are provided by residues 167–169 (DGK), 235–238 (SGRF), aspartate 246, 252–253 (RK), alanine 269, lysine 273, and lysine 277. Aspartate 246 is a binding site for L-methionine. An L-methionine-binding site is contributed by lysine 277.

It belongs to the AdoMet synthase family. As to quaternary structure, homotetramer. Mn(2+) serves as cofactor. Requires Mg(2+) as cofactor. It depends on Co(2+) as a cofactor. The cofactor is K(+).

It is found in the cytoplasm. It carries out the reaction L-methionine + ATP + H2O = S-adenosyl-L-methionine + phosphate + diphosphate. Its pathway is amino-acid biosynthesis; S-adenosyl-L-methionine biosynthesis; S-adenosyl-L-methionine from L-methionine: step 1/1. Its function is as follows. Catalyzes the formation of S-adenosylmethionine from methionine and ATP. The reaction comprises two steps that are both catalyzed by the same enzyme: formation of S-adenosylmethionine (AdoMet) and triphosphate, and subsequent hydrolysis of the triphosphate. This Vitis vinifera (Grape) protein is S-adenosylmethionine synthase 4 (METK4).